A 315-amino-acid polypeptide reads, in one-letter code: Transposase for insertion sequence element IS640 (315 aa).

Residues 5-66 (EDFYMIKQMR…PFMDYIDMRL (62 aa)) enclose the HTH IS21-type domain. The 175-residue stretch at 111–285 (FETQPGYQLQ…TPEQRSRWSR (175 aa)) folds into the Integrase catalytic domain.

This sequence belongs to the transposase IS21/IS408/IS1162 family.

In terms of biological role, involved in the transposition of the insertion sequence. This is Transposase for insertion sequence element IS640 (istA) from Shigella sonnei.